A 1146-amino-acid polypeptide reads, in one-letter code: Ankyrin repeat and fibronectin type-III domain-containing protein 1 (1146 aa).

ANK repeat units follow at residues 133–162 (QGNE…PEEL) and 170–199 (EGLT…RESP). Residues 270–366 (MPTNVCLMVT…TTTPACASPS (97 aa)) form the Fibronectin type-III domain. A highly conserved peptide sequence region spans residues 607 to 614 (GLYLGYLK). Disordered regions lie at residues 855 to 887 (NSTS…QPCS), 945 to 964 (VKTP…NPDH), and 1106 to 1146 (PWAS…SSML). Residues 1131 to 1146 (EGPTASPMSEILSSML) show a composition bias toward polar residues.

Functionally, may play a role in neuronal function. This Homo sapiens (Human) protein is Ankyrin repeat and fibronectin type-III domain-containing protein 1.